The chain runs to 256 residues: Ribosomal RNA small subunit methyltransferase A (256 aa).

S-adenosyl-L-methionine contacts are provided by asparagine 12, leucine 14, glycine 39, glutamate 60, aspartate 85, and asparagine 103.

The protein belongs to the class I-like SAM-binding methyltransferase superfamily. rRNA adenine N(6)-methyltransferase family. RsmA subfamily.

The protein resides in the cytoplasm. The catalysed reaction is adenosine(1518)/adenosine(1519) in 16S rRNA + 4 S-adenosyl-L-methionine = N(6)-dimethyladenosine(1518)/N(6)-dimethyladenosine(1519) in 16S rRNA + 4 S-adenosyl-L-homocysteine + 4 H(+). Functionally, specifically dimethylates two adjacent adenosines (A1518 and A1519) in the loop of a conserved hairpin near the 3'-end of 16S rRNA in the 30S particle. May play a critical role in biogenesis of 30S subunits. This Legionella pneumophila subsp. pneumophila (strain Philadelphia 1 / ATCC 33152 / DSM 7513) protein is Ribosomal RNA small subunit methyltransferase A.